The sequence spans 626 residues: Leucine-rich repeat and fibronectin type-III domain-containing protein 3 (626 aa).

The first 16 residues, 1–16 (MAVLPLLLCLLPLAPA), serve as a signal peptide directing secretion. At 17–539 (SSPPQPATSS…PHAPFLGGTM (523 aa)) the chain is on the extracellular side. One can recognise an LRRNT domain in the interval 19 to 59 (PPQPATSSPCPRRCRCQTQSLPLSVLCPGAGLLFVPPSLDR). LRR repeat units follow at residues 84–105 (GLLH…AFAD), 108–129 (ALRA…QLRG), 132–153 (NLRH…ALDD), 157–178 (TLED…ALGR), 181–202 (NVNT…AFSR), and 205–226 (KLAR…PLFS). The region spanning 249–295 (NPLHCNCELVWLRRLAREDDLEACASPPALGGRYFWAVGEEEFVCEP) is the LRRCT domain. The Ig-like domain occupies 295-382 (PPVVTHRSPP…GEATAAVELT (88 aa)). Residues 308–395 (PAGRPAALRC…PPPPQLANST (88 aa)) form the Fibronectin type-III 1 domain. A disulfide bridge connects residues C317 and C366. Residues N339, N348, and N393 are each glycosylated (N-linked (GlcNAc...) asparagine). The segment at 382–423 (TVGPPPPPQLANSTSCDPPRDGEPDALTPPSAASASAKVADT) is disordered. Low complexity predominate over residues 406–423 (DALTPPSAASASAKVADT). The 99-residue stretch at 425–523 (APTDRGVQVT…GCARFSTEPA (99 aa)) folds into the Fibronectin type-III 2 domain. The chain crosses the membrane as a helical span at residues 540 to 560 (IIALGGVIVASVLVFIFVLLL). Topologically, residues 561–626 (RYKVHGVQPP…WGPSHEPAGP (66 aa)) are cytoplasmic.

The protein belongs to the LRFN family. Can form heteromeric complexes with LRFN1, LRFN2, LRFN4 and LRFN5. Able to form homomeric complexes across cell junctions, between adjacent cells. Does not interact with DLG4. N-glycosylated. Expressed in brain. Within brain, expressed in hippocampus, cerebellum, olfactory bulb and forebrain (at protein level).

Its subcellular location is the cell membrane. The protein localises to the cell projection. The protein resides in the axon. It is found in the dendrite. It localises to the synapse. Its subcellular location is the presynaptic cell membrane. The protein localises to the postsynaptic cell membrane. In terms of biological role, cell adhesion molecule that mediates homophilic cell-cell adhesion in a Ca(2+)-independent manner. Promotes neurite outgrowth in hippocampal neurons. In Rattus norvegicus (Rat), this protein is Leucine-rich repeat and fibronectin type-III domain-containing protein 3.